Consider the following 357-residue polypeptide: Protein RecA (357 aa).

73 to 80 (GPESSGKT) provides a ligand contact to ATP.

The protein belongs to the RecA family.

Its subcellular location is the cytoplasm. Can catalyze the hydrolysis of ATP in the presence of single-stranded DNA, the ATP-dependent uptake of single-stranded DNA by duplex DNA, and the ATP-dependent hybridization of homologous single-stranded DNAs. It interacts with LexA causing its activation and leading to its autocatalytic cleavage. The chain is Protein RecA from Methylibium petroleiphilum (strain ATCC BAA-1232 / LMG 22953 / PM1).